Reading from the N-terminus, the 358-residue chain is 3-dehydroquinate synthase (358 aa).

NAD(+)-binding positions include 72-77 (GGERVK), 106-110 (GALLD), 130-131 (ST), Lys143, and Lys151. Zn(2+) contacts are provided by Glu184, His245, and His261.

It belongs to the sugar phosphate cyclases superfamily. Dehydroquinate synthase family. It depends on NAD(+) as a cofactor. Co(2+) serves as cofactor. Requires Zn(2+) as cofactor.

It is found in the cytoplasm. It catalyses the reaction 7-phospho-2-dehydro-3-deoxy-D-arabino-heptonate = 3-dehydroquinate + phosphate. It functions in the pathway metabolic intermediate biosynthesis; chorismate biosynthesis; chorismate from D-erythrose 4-phosphate and phosphoenolpyruvate: step 2/7. In terms of biological role, catalyzes the conversion of 3-deoxy-D-arabino-heptulosonate 7-phosphate (DAHP) to dehydroquinate (DHQ). In Aeropyrum pernix (strain ATCC 700893 / DSM 11879 / JCM 9820 / NBRC 100138 / K1), this protein is 3-dehydroquinate synthase (aroB).